Reading from the N-terminus, the 313-residue chain is Malate dehydrogenase (313 aa).

Residues 8–13 and D33 contribute to the NAD(+) site; that span reads GAGNVG. Substrate is bound by residues R83 and R89. NAD(+)-binding positions include N96 and 119-121; that span reads ISN. The substrate site is built by N121 and R152. Catalysis depends on H176, which acts as the Proton acceptor.

The protein belongs to the LDH/MDH superfamily. MDH type 3 family.

The enzyme catalyses (S)-malate + NAD(+) = oxaloacetate + NADH + H(+). Catalyzes the reversible oxidation of malate to oxaloacetate. This Bacteroides fragilis (strain ATCC 25285 / DSM 2151 / CCUG 4856 / JCM 11019 / LMG 10263 / NCTC 9343 / Onslow / VPI 2553 / EN-2) protein is Malate dehydrogenase.